Consider the following 1388-residue polypeptide: MAPRRNNGQCWCLLMLLSVSTPLPAVTQTRGATETASQGHLDLTQLIGVPLPSSVSFVTGYGGFPAYSFGPGANVGRPARTLIPSTFFRDFAISVVVKPSSTRGGVLFAITDAFQKVIYLGLRLSGVEDGHQRIILYYTEPGSHVSQEAAAFSVPVMTHRWNRFAMIVQGEEVTLLVNCEEHSRIPFQRSSQALAFESSAGIFMGNAGATGLERFTGSLQQLTVHPDPRTPEELCDPEESSASGETSGLQEADGVAEILEAVTYTQASPKEAKVEPINTPPTPSSPFEDMELSGEPVPEGTLETTNMSIIQHSSPKQGSGEILNDTLEGVHSVDGDPITDSGSGAGAFLDIAEEKNLAATAAGLAEVPISTAGEAEASSVPTGGPTLSMSTENPEEGVTPGPDNEERLAATAAGEAEALASMPGEVEASGVAPGELDLSMSAQSLGEEATVGPSSEDSLTTAAAATEVSLSTFEDEEASGVPTDGLAPLTATMAPERAVTSGPGDEEDLAAATTEEPLITAGGEESGSPPPDGPPLPLPTVAPERWITPAQREHVGMKGQAGPKGEKGDAGEELPGPPEPSGPVGPTAGAEAEGSGLGWGSDVGSGSGDLVGSEQLLRGPPGPPGPPGLPGIPGKPGTDVFMGPPGSPGEDGPAGEPGPPGPEGQPGVDGATGLPGMKGEKGARGPNGSVGEKGDPGNRGLPGPPGKKGQAGPPGVMGPPGPPGPPGPPGPGCTMGLGFEDTEGSGSTQLLNEPKLSRPTAAIGLKGEKGDRGPKGERGMDGASIVGPPGPRGPPGHIKVLSNSLINITHGFMNFSDIPELVGPPGPDGLPGLPGFPGPRGPKGDTGLPGFPGLKGEQGEKGEPGAILTEDIPLERLMGKKGEPGMHGAPGPMGPKGPPGHKGEFGLPGRPGRPGLNGLKGTKGDPGVIMQGPPGLPGPPGPPGPPGAVINIKGAIFPIPVRPHCKMPVDTAHPGSPELITFHGVKGEKGSWGLPGSKGEKGDQGAQGPPGPPLDLAYLRHFLNNLKGENGDKGFKGEKGEKGDINGSFLMSGPPGLPGNPGPAGQKGETVVGPQGPPGAPGLPGPPGFGRPGDPGPPGPPGPPGPPAILGAAVALPGPPGPPGQPGLPGSRNLVTAFSNMDDMLQKAHLVIEGTFIYLRDSTEFFIRVRDGWKKLQLGELIPIPADSPPPPALSSNPHQLLPPPNPISSANYEKPALHLAALNMPFSGDIRADFQCFKQARAAGLLSTYRAFLSSHLQDLSTIVRKAERYSLPIVNLKGQVLFNNWDSIFSGHGGQFNMHIPIYSFDGRDIMTDPSWPQKVIWHGSSPHGVRLVDNYCEAWRTADTAVTGLASPLSTGKILDQKAYSCANRLIVLCIENSFMTDARK.

Residues 1–27 form the signal peptide; that stretch reads MAPRRNNGQCWCLLMLLSVSTPLPAVT. One can recognise a Laminin G-like domain in the interval 66-249; the sequence is AYSFGPGANV…SSASGETSGL (184 aa). A disordered region spans residues 223–250; the sequence is TVHPDPRTPEELCDPEESSASGETSGLQ. The interval 229 to 555 is nonhelical region 1 (NC1); sequence RTPEELCDPE…WITPAQREHV (327 aa). Residues 240–249 show a composition bias toward polar residues; it reads SSASGETSGL. Residues Ser243 and Ser247 are each glycosylated (O-linked (Xyl...) (chondroitin sulfate) serine). A glycan (O-linked (GalNAc...) threonine) is linked at Thr265. The interval 266–301 is disordered; it reads QASPKEAKVEPINTPPTPSSPFEDMELSGEPVPEGT. Asn306 and Asn324 each carry an N-linked (GlcNAc...) asparagine glycan. O-linked (Xyl...) (chondroitin sulfate) serine glycosylation is present at Ser343. A run of 4 repeats spans residues 358-408, 409-459, 460-509, and 510-555. The segment at 358–555 is 4 X tandem repeats; the sequence is AATAAGLAEV…WITPAQREHV (198 aa). The tract at residues 371–795 is disordered; sequence TAGEAEASSV…VGPPGPRGPP (425 aa). Positions 379–392 are enriched in polar residues; that stretch reads SVPTGGPTLSMSTE. Residues 409-420 show a composition bias toward low complexity; that stretch reads AATAAGEAEALA. Residues 452–472 are compositionally biased toward polar residues; sequence GPSSEDSLTTAAAATEVSLST. Positions 510-527 are enriched in low complexity; it reads AAATTEEPLITAGGEESG. Residues 528–540 show a composition bias toward pro residues; the sequence is SPPPDGPPLPLPT. The interval 556–573 is triple-helical region 1 (COL1); it reads GMKGQAGPKGEKGDAGEE. Residues 574–618 form a nonhelical region 2 (NC2) region; it reads LPGPPEPSGPVGPTAGAEAEGSGLGWGSDVGSGSGDLVGSEQLLR. Residues 595–609 are compositionally biased toward gly residues; sequence SGLGWGSDVGSGSGD. 2 consecutive Collagen-like domains span residues 619–680 and 681–731; these read GPPG…MKGE and KGAR…PPGP. A triple-helical region 2 (COL2) region spans residues 619–732; that stretch reads GPPGPPGPPG…PGPPGPPGPG (114 aa). Residues 620–630 are compositionally biased toward pro residues; sequence PPGPPGPPGLP. Residue Asn687 is glycosylated (N-linked (GlcNAc...) asparagine). The segment covering 716 to 731 has biased composition (pro residues); that stretch reads VMGPPGPPGPPGPPGP. The nonhelical region 3 (NC3) stretch occupies residues 733–763; that stretch reads CTMGLGFEDTEGSGSTQLLNEPKLSRPTAAI. O-linked (Xyl...) (chondroitin sulfate) serine glycosylation is present at Ser745. The segment at 764 to 798 is triple-helical region 3 (COL3); it reads GLKGEKGDRGPKGERGMDGASIVGPPGPRGPPGHI. Basic and acidic residues predominate over residues 766 to 780; the sequence is KGEKGDRGPKGERGM. The nonhelical region 4 (NC4) stretch occupies residues 799–822; the sequence is KVLSNSLINITHGFMNFSDIPELV. Asn807 and Asn814 each carry an N-linked (GlcNAc...) asparagine glycan. The Collagen-like 3 domain occupies 823–865; the sequence is GPPGPDGLPGLPGFPGPRGPKGDTGLPGFPGLKGEQGEKGEPG. The tract at residues 823 to 867 is triple-helical region 4 (COL4); the sequence is GPPGPDGLPGLPGFPGPRGPKGDTGLPGFPGLKGEQGEKGEPGAI. Pro residues predominate over residues 827–840; it reads PDGLPGLPGFPGPR. Residues 827–864 form a disordered region; sequence PDGLPGLPGFPGPRGPKGDTGLPGFPGLKGEQGEKGEP. Residues 868 to 878 are nonhelical region 5 (NC5); it reads LTEDIPLERLM. Residues 879 to 927 enclose the Collagen-like 4 domain; it reads GKKGEPGMHGAPGPMGPKGPPGHKGEFGLPGRPGRPGLNGLKGTKGDPG. Residues 879–949 form a triple-helical region 5 (COL5) region; sequence GKKGEPGMHG…PGPPGPPGAV (71 aa). The nonhelical region 6 (NC6) stretch occupies residues 950-983; it reads INIKGAIFPIPVRPHCKMPVDTAHPGSPELITFH. Positions 984–1013 are triple-helical region 6 (COL6); it reads GVKGEKGSWGLPGSKGEKGDQGAQGPPGPP. 2 disordered regions span residues 988–1016 and 1029–1133; these read EKGS…PLDL and ENGD…GSRN. Positions 1014 to 1027 are nonhelical region 7 (NC7); sequence LDLAYLRHFLNNLK. The tract at residues 1028–1045 is triple-helical region 7 (COL7); the sequence is GENGDKGFKGEKGEKGDI. A compositionally biased stretch (basic and acidic residues) spans 1029 to 1044; it reads ENGDKGFKGEKGEKGD. An N-linked (GlcNAc...) asparagine glycan is attached at Asn1046. Residues 1046–1052 form a nonhelical region 8 (NC8) region; it reads NGSFLMS. The segment at 1053-1107 is triple-helical region 8 (COL8); it reads GPPGLPGNPGPAGQKGETVVGPQGPPGAPGLPGPPGFGRPGDPGPPGPPGPPGPP. Composition is skewed to pro residues over residues 1075-1107 and 1117-1126; these read QGPP…PGPP and PGPPGPPGQP. The tract at residues 1108–1117 is nonhelical region 9 (NC9); that stretch reads AILGAAVALP. The tract at residues 1118-1132 is triple-helical region 9 (COL9); the sequence is GPPGPPGQPGLPGSR. The nonhelical region 10 (NC10) stretch occupies residues 1133–1388; it reads NLVTAFSNMD…ENSFMTDARK (256 aa). Disulfide bonds link Cys1237/Cys1377 and Cys1339/Cys1369.

Belongs to the multiplexin collagen family. Trimer; disulfide-linked. As to quaternary structure, interacts moderately with EFEMP2. In terms of processing, prolines at the third position of the tripeptide repeating unit (G-X-Y) are hydroxylated in some or all of the chains. O-glycosylated; with core 1 or possibly core 8 glycans. Contains chondroitin sulfate. As to expression, detected in fibroblasts and urine (at protein level). Detected in placenta (at protein level). Expressed predominantly in internal organs such as adrenal gland, pancreas and kidney.

Its subcellular location is the secreted. It localises to the extracellular space. It is found in the extracellular matrix. Its function is as follows. Structural protein that stabilizes microvessels and muscle cells, both in heart and in skeletal muscle. In terms of biological role, restin potently inhibits angiogenesis. This is Collagen alpha-1(XV) chain (COL15A1) from Homo sapiens (Human).